Consider the following 442-residue polypeptide: UDP-glucosyltransferase 29 (442 aa).

His20 acts as the Proton acceptor in catalysis. Position 20 (His20) interacts with an anthocyanidin. The active-site Charge relay is Asp116. Residues Thr138, Ala318, Gln320, His335, Trp338, Ser340, Glu343, Asp359, and Gln360 each contribute to the UDP-alpha-D-glucose site.

This sequence belongs to the UDP-glycosyltransferase family. As to expression, expressed at higher levels in roots than in leaves.

It carries out the reaction (20S)-ginsenoside F2 + UDP-alpha-D-glucose = (20S)-ginsenoside Rd + UDP + H(+). The enzyme catalyses (20S)-ginsenoside Rh2 + UDP-alpha-D-glucose = (20S)-ginsenoside Rg3 + UDP + H(+). It participates in secondary metabolite biosynthesis; terpenoid biosynthesis. Its function is as follows. Component of the dammarane-type triterpene saponins (e.g. PPD-type ginsenosides or panaxosides) biosynthetic pathway. Glycosyltransferase that catalyzes the conversion of ginsenoside Rh2 to ginsenoside Rg3. Triggers the biosynthesis of ginsenoside Rd from ginsenoside F2. In Panax ginseng (Korean ginseng), this protein is UDP-glucosyltransferase 29.